We begin with the raw amino-acid sequence, 265 residues long: Putative hydro-lyase Teth514_1597 (265 aa).

It belongs to the D-glutamate cyclase family.

The sequence is that of Putative hydro-lyase Teth514_1597 from Thermoanaerobacter sp. (strain X514).